A 141-amino-acid polypeptide reads, in one-letter code: Oleosin L (141 aa).

The next 3 helical transmembrane spans lie at 23-43 (VLFF…LALA), 46-66 (VVLM…ILPV), and 74-94 (AAAF…LIWV). The Proline-knot motif lies at 54-65 (PVFLLLSPVILP).

The protein belongs to the oleosin family. In terms of tissue distribution, expressed in megagametophytes (at protein level).

The protein localises to the lipid droplet. It is found in the membrane. The sequence is that of Oleosin L from Pinus massoniana (Chinese red pine).